Here is an 802-residue protein sequence, read N- to C-terminus: Potassium channel AKT2/3 (802 aa).

Topologically, residues 1 to 79 are cytoplasmic; it reads MDLKYSASHC…PMDSRYRCWE (79 aa). The chain crosses the membrane as a helical span at residues 80-100; it reads FYMVLLVAYSAWVYPFEVAFL. Residues 101 to 109 lie on the Extracellular side of the membrane; that stretch reads NSSPKRNLC. Residues 110-130 traverse the membrane as a helical segment; that stretch reads IADNIVDLFFAVDIVLTFFVA. Residues 131 to 153 are Cytoplasmic-facing; that stretch reads YIDERTQLLVREPKQIAVRYLST. A helical transmembrane segment spans residues 154–174; sequence WFLMDVASTIPFDAIGYLITG. At 175-183 the chain is on the extracellular side; sequence TSTLNITCN. Asparagine 179 carries an N-linked (GlcNAc...) asparagine glycan. A helical; Voltage-sensor transmembrane segment spans residues 184–204; sequence LLGLLRFWRLRRVKHLFTRLE. Residues 205 to 218 are Cytoplasmic-facing; the sequence is KDIRYSYFWIRCFR. The chain crosses the membrane as a helical span at residues 219-239; that stretch reads LLSVTLFLVHCAGCSYYLIAD. Residues 240–265 lie on the Extracellular side of the membrane; sequence RYPHQGKTWTDAIPNFTETSLSIRYI. Asparagine 254 carries N-linked (GlcNAc...) asparagine glycosylation. An intramembrane region (pore-forming) is located at residues 266–285; sequence AAIYWSITTMTTVGYGDLHA. At 286 to 288 the chain is on the extracellular side; the sequence is SNT. The helical transmembrane segment at 289–309 threads the bilayer; it reads IEMVFITVYMLFNLGLTAYLI. Topologically, residues 310–802 are cytoplasmic; sequence GNMTNLVVEG…KLYFVVNKII (493 aa). 394 to 513 provides a ligand contact to a nucleoside 3',5'-cyclic phosphate; that stretch reads LFKGVSREIL…ATMLKNFLQH (120 aa). ANK repeat units follow at residues 540 to 569, 573 to 602, 606 to 636, 637 to 666, and 670 to 699; these read NIAS…SPDI, KGKT…NIHI, NGNS…SDPH, IAGD…NVDT, and HGVT…DVVC. Residues 725–802 form the KHA domain; sequence RVSIYRGHPL…KLYFVVNKII (78 aa).

The protein belongs to the potassium channel family. Plant (TC 1.A.1.4) subfamily. In terms of assembly, the potassium channel is probably composed of a homo- or heterotetrameric complex of pore-forming subunits. Interacts with the phosphatase PPC2A and the kinase CIPK6. May interact with AKT1, KAT1 and KAT3. Interacts with SLAC1. Post-translationally, dephosphorylated by PP2CA. As to expression, expressed mainly in the phloem tissues throughout the plant but also, at a lower level, in leaf epiderm, mesophyll and guard cells.

It localises to the endoplasmic reticulum membrane. In terms of biological role, highly selective and weak inward-rectifying potassium channel. Plays a role in both loading and unloading potassium into/from the phloem sap. Seems to control sugar loading into phloem via a voltage-dependent process. Blocked by physiological concentrations of external calcium and by external acidification. May interact with the cytoskeleton or with regulatory proteins. Dephosphorylation by PP2CA not only leads to the inhibition of potassium currents but also to an increase of the voltage-dependence of the channel. Regulated by the CBL4/CIPK6 calcium sensor/protein kinase complex via a kinase interaction-dependent but phosphorylation-independent translocation of the channel to the plasma membrane. This chain is Potassium channel AKT2/3 (AKT2), found in Arabidopsis thaliana (Mouse-ear cress).